Reading from the N-terminus, the 945-residue chain is MKTVALKEASSILPKYWPLTMFVHHNPLHELESLHFKQALKIAKDLFDAKVYMDPSYYVDLYRKGKVRKDSLEKNIEEFLRENNFNFNKYKVRKFLTDISPSWKEYKEESFNNPSIKVPDYLLEYIKKDKGYDNLDNLFYTYIKKYLFSEILDILFDQNIYNVFFNDAVEFISRFLDEGQTSITLPFREQGYWNCFRQFYKLDKHPEDIIEEFENTFQPPSLQDYARQLYIRFFGWSSFIKFRESTPFYPYQEEFPINLEDFGSSLLYLENQYIQELNKSKIKNYFDLMAFYKENKYYVILKLFEHRKILTPKYISKLYTSKDYDNIFNKFINEEIESEAKAIVNLSTKVFDKSDYLQTYNLVKTLKEDEECYLWIKSLEDSYALNFGREFIKEYQIDEKPKAFAVFCVDVRSEALRRNLERVDNYKTFGVAGFFGVKMALIEFDKAHELLLCPAMEIPDKVVLEVPTQKTQDYEKRKKLLISLKKILEGLKNNPYTPFFAVESFGWLFGYKLFGKTLFPSVVAKIDKKIKPKPPKTFYMIDKLSEKEVDTYTDKFFYEKIYQAFEKEGIKIKDCEVKDILSKLKNNENISQNYQKVLNRYRITKQYYDYIYNRFSNIGYTLDEQVILAENFLRLIGMVEDFPEFVLLVGHGSVSDNNPYESALDCGACGGNSGYHNVRAMCMILNKKEVREKLSIRIPDGTIFIPGLHNTTTDEIEFYDEDLVPENSLDKWEEIKKDFKKAGEKTRIERLSSLPYADNPEDVIVRSIDWSEMRPEWGLSKNLGVFVGKSESRINSVLKNRFFLHSYDYKIDVDNSILKRILNGPLLIAQWINAEHYFSTVDNEKFGSGSKVYHNVVSRIGVFSGNYSDLKIGLPYQTVYVEDRPFHEPIRLIAFVEAPLEKVVEAASQTDHPMMLVKNEWIRLVVIDKEKNKVFLFSNGNFVEL.

Residues C408, D410, H651, and C666 each contribute to the Zn(2+) site.

The protein belongs to the inorganic carbon transporter (TC 9.A.2) DabA family. Forms a complex with DabB. Zn(2+) is required as a cofactor.

It is found in the cell inner membrane. Part of an energy-coupled inorganic carbon pump. This is Probable inorganic carbon transporter subunit DabA from Sulfurihydrogenibium azorense (strain DSM 15241 / OCM 825 / Az-Fu1).